The chain runs to 201 residues: Small ribosomal subunit protein uS5 (201 aa).

The interval 1–27 is disordered; that stretch reads MAGPQRRGSGAGGGERRDRKGRDGGAA. Over residues 14-23 the composition is skewed to basic and acidic residues; that stretch reads GERRDRKGRD. The 64-residue stretch at 34–97 folds into the S5 DRBM domain; sequence YVERVVAINR…EEAKKHFFKV (64 aa).

This sequence belongs to the universal ribosomal protein uS5 family. As to quaternary structure, part of the 30S ribosomal subunit. Contacts proteins S4 and S8.

In terms of biological role, with S4 and S12 plays an important role in translational accuracy. Its function is as follows. Located at the back of the 30S subunit body where it stabilizes the conformation of the head with respect to the body. The chain is Small ribosomal subunit protein uS5 from Streptomyces avermitilis (strain ATCC 31267 / DSM 46492 / JCM 5070 / NBRC 14893 / NCIMB 12804 / NRRL 8165 / MA-4680).